The following is a 375-amino-acid chain: Putative disease resistance protein At3g15700 (375 aa).

Positions 17–49 form a coiled coil; it reads KENDNVKKLKTATEELKDLRNIVMKRVKMYEDQ. Residues 158–372 form the NB-ARC domain; that stretch reads DNTGIIGLYG…LSTSPPNFSG (215 aa). 167 to 174 contributes to the ATP binding site; it reads GVEGVGKT.

In terms of biological role, potential disease resistance protein. The sequence is that of Putative disease resistance protein At3g15700 from Arabidopsis thaliana (Mouse-ear cress).